Here is a 66-residue protein sequence, read N- to C-terminus: Large ribosomal subunit protein uL29 (66 aa).

Belongs to the universal ribosomal protein uL29 family.

This chain is Large ribosomal subunit protein uL29, found in Kosmotoga olearia (strain ATCC BAA-1733 / DSM 21960 / TBF 19.5.1).